The primary structure comprises 494 residues: MPTESASCSTARQTKQKRKSHSLSIRRTNSSEQERTGLPRDMLEGQDSKLPSSVRSTLLELFGQIEREFENLYIENLELRREIDTLNERLAAEGQAIDGAELSKGQLKTKASHSTSQLSQKLKTTYKASTSKIVSSFKTTTSRAACQLVKEYIGHRDGIWDVSVAKTQPVVLGTASADHTALLWSIETGKCLVKYAGHVGSVNSIKFHPSEQLALTASGDQTAHIWRYAVQLPTPQPVADTSISGEDEVECSDKDEPDLDGDVSSDCPTIRVPLTSLKSHQGVVIASDWLVGGKQAVTASWDRTANLYDVETSELVHSLTGHDQELTHCCTHPTQRLVVTSSRDTTFRLWDFRDPSIHSVNVFQGHTDTVTSAVFTVGDNVVSGSDDRTVKVWDLKNMRSPIATIRTDSAINRINVCVGQKIIALPHDNRQVRLFDMSGVRLARLPRSSRQGHRRMVCCSAWSEDHPVCNLFTCGFDRQAIGWNINIPALLQEK.

Composition is skewed to polar residues over residues 1-13 (MPTE…TARQ) and 22-31 (SLSIRRTNSS). Positions 1 to 50 (MPTESASCSTARQTKQKRKSHSLSIRRTNSSEQERTGLPRDMLEGQDSKL) are disordered. Positions 32–47 (EQERTGLPRDMLEGQD) are enriched in basic and acidic residues. 2 WD repeats span residues 154-194 (GHRD…CLVK) and 197-236 (GHVG…PTPQ). A disordered region spans residues 237-265 (PVADTSISGEDEVECSDKDEPDLDGDVSS). Positions 245–263 (GEDEVECSDKDEPDLDGDV) are enriched in acidic residues. WD repeat units follow at residues 279-318 (SHQG…LVHS), 321-360 (GHDQ…IHSV), 365-403 (GHTD…SPIA), 406-445 (RTDS…LARL), and 452-493 (GHRR…LLQE).

In terms of assembly, forms homodimers. Interacts with PACS1. Interacts with PACS2.

Its subcellular location is the cytoplasm. It is found in the nucleus. Required for normal ER Ca2+ handling in lymphocytes. Together with PACS1, it plays an essential role in stabilizing peripheral lymphocyte populations. The chain is WD repeat-containing protein 37 (WDR37) from Homo sapiens (Human).